The following is a 199-amino-acid chain: 7-methyl-GTP pyrophosphatase (199 aa).

Catalysis depends on aspartate 76, which acts as the Proton acceptor.

This sequence belongs to the Maf family. YceF subfamily. A divalent metal cation serves as cofactor.

It localises to the cytoplasm. It carries out the reaction N(7)-methyl-GTP + H2O = N(7)-methyl-GMP + diphosphate + H(+). Its function is as follows. Nucleoside triphosphate pyrophosphatase that hydrolyzes 7-methyl-GTP (m(7)GTP). May have a dual role in cell division arrest and in preventing the incorporation of modified nucleotides into cellular nucleic acids. The protein is 7-methyl-GTP pyrophosphatase (maf-2) of Brucella suis biovar 1 (strain 1330).